The primary structure comprises 443 residues: MAQFFKAKPNSSKQLSAKVSLQVTRLDHLGAGIAQHNGKVVFIPGVLPGEKAMVQLTEQKKRYSRAKLLNLETHSIDRVEPKCAHYHQCGGCDLQHLSLEKQRLHKESALVSLMAKLSHTEAEALVPAIIGEQWHYRRRARLATFYHQETKRTTLGFRAQSSKEVIDISSCPVLAKSLSELISPLSKLLNQLASRRALGHVELIDVDNGQFVVVRATKELSDKDKEKLLSFAQEHKVNLIVQGNEGELLVIKGPKELPFYTLNSDIKLSFTPGNFVQVNGEINRAMVDQAVQWLDVKADERVLDLFCGVGNFSLPLAKSGAEVIGVEGVPEMVAQARINAKQSDLSDVTFFHTDLSADLSKEPWLGKVDKLLLDPARAGAFESLQWLKKMKPKSIVYVSCDPSSLARDSEPLLKHGYKLKKLGLVDMFPQTHHIEAMALFELS.

Residues 12–70 (SKQLSAKVSLQVTRLDHLGAGIAQHNGKVVFIPGVLPGEKAMVQLTEQKKRYSRAKLLN) form the TRAM domain. The [4Fe-4S] cluster site is built by cysteine 83, cysteine 89, cysteine 92, and cysteine 171. The S-adenosyl-L-methionine site is built by glutamine 277, phenylalanine 306, asparagine 311, glutamate 327, aspartate 354, and aspartate 374. Cysteine 400 (nucleophile) is an active-site residue.

This sequence belongs to the class I-like SAM-binding methyltransferase superfamily. RNA M5U methyltransferase family. RlmD subfamily.

The enzyme catalyses uridine(1939) in 23S rRNA + S-adenosyl-L-methionine = 5-methyluridine(1939) in 23S rRNA + S-adenosyl-L-homocysteine + H(+). Functionally, catalyzes the formation of 5-methyl-uridine at position 1939 (m5U1939) in 23S rRNA. This chain is 23S rRNA (uracil(1939)-C(5))-methyltransferase RlmD, found in Shewanella woodyi (strain ATCC 51908 / MS32).